The primary structure comprises 460 residues: Elongation factor 1-alpha-B (460 aa).

Gly2 carries the n,N,N-trimethylglycine modification. Residue Lys3 is modified to N6,N6-dimethyllysine; alternate. Lys3 carries the N6-methyllysine; alternate modification. The tr-type G domain occupies 5–240 (KGHINVVVIG…DSIEPPARPT (236 aa)). Positions 14 to 21 (GHVDSGKS) are G1. 14-21 (GHVDSGKS) lines the GTP pocket. Lys30 is subject to N6-methyllysine. Residues 70-74 (GITID) form a G2 region. Position 79 is an N6,N6,N6-trimethyllysine (Lys79). Positions 91 to 94 (DAPG) are G3. Residues 91–95 (DAPGH) and 153–156 (NKMD) each bind GTP. Positions 153 to 156 (NKMD) are G4. The segment at 192–194 (SGF) is G5. Lys316 bears the N6,N6-dimethyllysine; alternate mark. An N6-methyllysine; alternate modification is found at Lys316. At Lys390 the chain carries N6-methyllysine.

Belongs to the TRAFAC class translation factor GTPase superfamily. Classic translation factor GTPase family. EF-Tu/EF-1A subfamily.

Its subcellular location is the cytoplasm. Its function is as follows. This protein promotes the GTP-dependent binding of aminoacyl-tRNA to the A-site of ribosomes during protein biosynthesis. The sequence is that of Elongation factor 1-alpha-B (tef102) from Schizosaccharomyces pombe (strain 972 / ATCC 24843) (Fission yeast).